A 403-amino-acid chain; its full sequence is Phosphopentomutase (403 aa).

Residues Asp13, Asp298, His303, Asp339, His340, and His351 each coordinate Mn(2+).

Belongs to the phosphopentomutase family. The cofactor is Mn(2+).

Its subcellular location is the cytoplasm. The enzyme catalyses 2-deoxy-alpha-D-ribose 1-phosphate = 2-deoxy-D-ribose 5-phosphate. It carries out the reaction alpha-D-ribose 1-phosphate = D-ribose 5-phosphate. Its pathway is carbohydrate degradation; 2-deoxy-D-ribose 1-phosphate degradation; D-glyceraldehyde 3-phosphate and acetaldehyde from 2-deoxy-alpha-D-ribose 1-phosphate: step 1/2. Its function is as follows. Isomerase that catalyzes the conversion of deoxy-ribose 1-phosphate (dRib-1-P) and ribose 1-phosphate (Rib-1-P) to deoxy-ribose 5-phosphate (dRib-5-P) and ribose 5-phosphate (Rib-5-P), respectively. The polypeptide is Phosphopentomutase (Streptococcus pyogenes serotype M3 (strain ATCC BAA-595 / MGAS315)).